Consider the following 240-residue polypeptide: Demethylmenaquinone methyltransferase (240 aa).

Residues T62, D80, 102–103 (DA), and S119 contribute to the S-adenosyl-L-methionine site.

This sequence belongs to the class I-like SAM-binding methyltransferase superfamily. MenG/UbiE family.

The enzyme catalyses a 2-demethylmenaquinol + S-adenosyl-L-methionine = a menaquinol + S-adenosyl-L-homocysteine + H(+). The protein operates within quinol/quinone metabolism; menaquinone biosynthesis; menaquinol from 1,4-dihydroxy-2-naphthoate: step 2/2. Its function is as follows. Methyltransferase required for the conversion of demethylmenaquinol (DMKH2) to menaquinol (MKH2). This is Demethylmenaquinone methyltransferase from Beutenbergia cavernae (strain ATCC BAA-8 / DSM 12333 / CCUG 43141 / JCM 11478 / NBRC 16432 / NCIMB 13614 / HKI 0122).